Consider the following 249-residue polypeptide: Triosephosphate isomerase (249 aa).

9–11 (NWK) is a substrate binding site. Residue histidine 95 is the Electrophile of the active site. Glutamate 165 serves as the catalytic Proton acceptor. Residues glycine 171, serine 210, and 231 to 232 (GG) each bind substrate.

The protein belongs to the triosephosphate isomerase family. In terms of assembly, homodimer.

It is found in the cytoplasm. It catalyses the reaction D-glyceraldehyde 3-phosphate = dihydroxyacetone phosphate. It functions in the pathway carbohydrate biosynthesis; gluconeogenesis. Its pathway is carbohydrate degradation; glycolysis; D-glyceraldehyde 3-phosphate from glycerone phosphate: step 1/1. Its function is as follows. Involved in the gluconeogenesis. Catalyzes stereospecifically the conversion of dihydroxyacetone phosphate (DHAP) to D-glyceraldehyde-3-phosphate (G3P). The chain is Triosephosphate isomerase from Hyphomonas neptunium (strain ATCC 15444).